Reading from the N-terminus, the 557-residue chain is Protein Red (557 aa).

Residues 1-84 (MPERDSEPFS…RKKKSYYAKL (84 aa)) are disordered. The span at 16–25 (DGHDVDDPHS) shows a compositional bias: basic and acidic residues. Positions 42–53 (TPRAAPTSAPPS) are enriched in low complexity. Residues Lys-98 and Lys-137 each carry the N6-acetyllysine modification. Residue Lys-151 forms a Glycyl lysine isopeptide (Lys-Gly) (interchain with G-Cter in SUMO2) linkage. Residues 181–205 (KEKEEEELMEKPQKETKKDEDPENK) form a disordered region. Ser-287 is modified (phosphoserine). A compositionally biased stretch (basic residues) spans 294–303 (RNKKLKKKDK). Positions 294–402 (RNKKLKKKDK…PIDVDKGPGS (109 aa)) are disordered. The span at 304-313 (GKLEEKKPPE) shows a compositional bias: basic and acidic residues. Residues Lys-310 and Lys-331 each participate in a glycyl lysine isopeptide (Lys-Gly) (interchain with G-Cter in SUMO2) cross-link. Over residues 332 to 398 (TPRDKERERY…VDDEPIDVDK (67 aa)) the composition is skewed to basic and acidic residues. Repeat copies occupy residues 342–343 (RE), 344–345 (RE), 346–347 (RD), 348–349 (RE), 350–351 (RD), 352–353 (RD), 354–355 (RD), 356–357 (RE), 358–359 (RE), 360–361 (RE), 362–363 (RD), 364–365 (RE), 366–367 (RE), 368–369 (RE), 370–371 (RD), 372–373 (RE), and 374–375 (RE). Positions 342-375 (RERERDRERDRDRDRERERERDRERERERDRERE) are 17 X 2 AA tandem repeats of R-[ED]. Residues Lys-386, Lys-388, Lys-404, and Lys-408 each participate in a glycyl lysine isopeptide (Lys-Gly) (interchain with G-Cter in SUMO2) cross-link. Phosphoserine occurs at positions 417 and 460. Thr-485 bears the Phosphothreonine mark. Residues Lys-496, Lys-501, and Lys-509 each participate in a glycyl lysine isopeptide (Lys-Gly) (interchain with G-Cter in SUMO2) cross-link. Ser-536 is modified (phosphoserine). Glycyl lysine isopeptide (Lys-Gly) (interchain with G-Cter in SUMO2) cross-links involve residues Lys-541, Lys-543, Lys-544, and Lys-553.

The protein belongs to the RED family. As to quaternary structure, component of the spliceosome B complex. Interacts with SMU1. Interacts with MAD1L1. May interact with DHX15.

It localises to the nucleus. Its subcellular location is the nucleoplasm. The protein localises to the chromosome. The protein resides in the cytoplasm. It is found in the cytoskeleton. It localises to the spindle pole. Functionally, involved in pre-mRNA splicing as a component of the spliceosome. Auxiliary spliceosomal protein that regulates selection of alternative splice sites in a small set of target pre-mRNA species. Required for normal mitotic cell cycle progression. Recruits MAD1L1 and MAD2L1 to kinetochores, and is required to trigger the spindle assembly checkpoint. Required for normal accumulation of SMU1. This chain is Protein Red (IK), found in Pongo abelii (Sumatran orangutan).